A 362-amino-acid polypeptide reads, in one-letter code: Probable cysteine protease RDL2 (362 aa).

Residues 1–28 (MAATPIRVIVSALVILSVLLLSSSLGVA) form the signal peptide. Positions 29 to 129 (TETEIERNET…ERYLYKEGDV (101 aa)) are cleaved as a propeptide — activation peptide. N36 carries N-linked (GlcNAc...) asparagine glycosylation. 2 disulfides stabilise this stretch: C151/C194 and C185/C228. Residue C154 is part of the active site. N234 carries an N-linked (GlcNAc...) asparagine glycan. A disulfide bridge links C287 with C338. Residues H293 and N313 contribute to the active site.

This sequence belongs to the peptidase C1 family.

Its function is as follows. Probable thiol protease. This is Probable cysteine protease RDL2 from Arabidopsis thaliana (Mouse-ear cress).